We begin with the raw amino-acid sequence, 33 residues long: Mu-theraphotoxin-Os1a (33 aa).

Disulfide bonds link C2–C17, C9–C22, and C16–C29. L33 is subject to Leucine amide.

It belongs to the neurotoxin 10 (Hwtx-1) family. 14 (Hntx-1) subfamily. Monomer. In terms of tissue distribution, expressed by the venom gland.

The protein localises to the secreted. Its function is as follows. Potently and reversibly inhibits some human voltage-gated sodium channels (Nav1.1/SCN1A (IC(50)=72.0 nM), Nav1.2/SCN2A (IC(50)=75.5 nM), Nav1.6/SCN8A (IC(50)=115.0 nM), Nav1.7/SCN9A (IC(50)=52.7-129.5 nM), Nav1.3/SCN3A (IC(50)=306.6 nM)). The hNav1.7/SCN9A channel inhibition occurs without any change in steady-state inactivation- and conductance-voltage relationships. On adult mouse DRG neurons, this toxin is approximately 1000-fold more efficient to inhibit tetrodotoxin (TTX)-sensitive than TTX-resistant sodium currents. In vivo, this toxin exhibits analgesic effects in mice pain models. In Omothymus schioedtei (Malaysian earth tiger tarantula), this protein is Mu-theraphotoxin-Os1a.